The sequence spans 436 residues: MSHEAVWQHVLEHIRRSITEVEFHTWFERIRPLGIRDGVLELAVPTSFALDWIRRHYAGLIQEALGLLGAQAPRFELRVVPGVVVQEDIFQAAPAEAPRPKLNPKYTFENFVVGPNNSMAHAAAVAVAESPGRAYNPLFIYGGVGLGKTHLMHAVGHSVAKRFPHLRIEYVSTETFTNELINAIREDRMTEFRERYRSVDLLLVDDVQFIAGKERTQEEFFHTFNALYEAHKQIILSSDRPPKDILTLEARLRSRFEWGLITDIQPPDLETRIAILKMNAEQRGLRIPEDALEYIARQVTSNIRELEGALMRAIAFASLNGVELTRAVAAKALSDIFAPRELEADPLEIIRKVADHFGLKPEELTGSGRKKEVVLPRQLAMYLVRELTRASLPEIGQLFGGRDHTTVLYAIQKVQELAESDREVQGLLRTLREACT.

A domain I, interacts with DnaA modulators region spans residues Met1–Val80. The interval Val80 to Pro100 is domain II. Residues Lys101–Ala317 are domain III, AAA+ region. The ATP site is built by Gly145, Gly147, Lys148, and Thr149. The segment at Ser318–Thr436 is domain IV, binds dsDNA.

It belongs to the DnaA family. As to quaternary structure, oligomerizes as a right-handed, spiral filament on DNA at oriC.

It localises to the cytoplasm. It carries out the reaction ATP + H2O = ADP + phosphate + H(+). Its function is as follows. Plays an essential role in the initiation and regulation of chromosomal replication. ATP-DnaA binds to the origin of replication (oriC) to initiate formation of the DNA replication initiation complex once per cell cycle. Binds the DnaA box (a 9 base pair repeat at the origin) and separates the double-stranded (ds)DNA. Forms a right-handed helical filament on oriC DNA; dsDNA binds to the exterior of the filament while single-stranded (ss)DNA is stabiized in the filament's interior. The ATP-DnaA-oriC complex binds and stabilizes one strand of the AT-rich DNA unwinding element (DUE), permitting loading of DNA polymerase. After initiation quickly degrades to an ADP-DnaA complex that is not apt for DNA replication. Binds acidic phospholipids. Functionally, the DnaA box consensus is 5'-TTATC[CA]A[CA]A-3' in this bacterium; oriC consists of 13 clustered DnaA boxes and a 40 base pair AT-rich region. ATP-DnaA binds cooperatively to multiple DnaA boxes, while ADP-DnaA binds with low cooperativity to the individual DnaA boxes. About 16-18 DnaA protein molecules bind their sites in oriC. Has a slow ATPase activity. Binds linear and supercoiled DNA. This is Chromosomal replication initiator protein DnaA from Thermus thermophilus (strain ATCC 27634 / DSM 579 / HB8).